Here is a 126-residue protein sequence, read N- to C-terminus: Muscarinic acetylcholine receptor M4 (126 aa).

The interval 1–90 is disordered; sequence MKQSVKKPPP…LQPRTLNPAS (90 aa). The Cytoplasmic portion of the chain corresponds to 1-126; it reads MKQSVKKPPP…PAGMRPAANV (126 aa). Residues 28-39 show a composition bias toward pro residues; that stretch reads APPPVLPPPPRP. Polar residues predominate over residues 47-57; sequence NESSSGSATQN. Positions 64–75 are enriched in low complexity; that stretch reads TELSTTEATTPA.

This sequence belongs to the G-protein coupled receptor 1 family. Muscarinic acetylcholine receptor subfamily. CHRM4 sub-subfamily.

It localises to the cell membrane. Its subcellular location is the postsynaptic cell membrane. Functionally, the muscarinic acetylcholine receptor mediates various cellular responses, including inhibition of adenylate cyclase, breakdown of phosphoinositides and modulation of potassium channels through the action of G proteins. Primary transducing effect is inhibition of adenylate cyclase. May couple to multiple functional responses in cell lines. The chain is Muscarinic acetylcholine receptor M4 (CHRM4) from Bos taurus (Bovine).